Here is a 96-residue protein sequence, read N- to C-terminus: Protein RnfH (96 aa).

Belongs to the UPF0125 (RnfH) family.

This is Protein RnfH from Shigella flexneri.